A 218-amino-acid chain; its full sequence is Adenylate kinase (218 aa).

10-15 (GAGKGT) provides a ligand contact to ATP. The tract at residues 30 to 59 (STGDMIRETIKSGSALGQELKKVLDAGELV) is NMP. AMP-binding positions include threonine 31, arginine 36, 57-59 (ELV), and glutamine 92. Residues 122–159 (GRRIHPASGRTYHTKFNPPKVADKDDVTGEPLITRTDD) are LID. ATP-binding positions include arginine 123 and 132–133 (TY). AMP contacts are provided by arginine 156 and arginine 167. An ATP-binding site is contributed by glutamine 202.

This sequence belongs to the adenylate kinase family. In terms of assembly, monomer.

It is found in the cytoplasm. It carries out the reaction AMP + ATP = 2 ADP. The protein operates within purine metabolism; AMP biosynthesis via salvage pathway; AMP from ADP: step 1/1. Catalyzes the reversible transfer of the terminal phosphate group between ATP and AMP. Plays an important role in cellular energy homeostasis and in adenine nucleotide metabolism. The chain is Adenylate kinase from Francisella tularensis subsp. tularensis (strain FSC 198).